The sequence spans 535 residues: Growth-regulating factor 2 (535 aa).

Residues 164–199 (PFTLTQWAELEQQALIYKYITANVPVPSSLLISIKK) form the QLQ domain. In terms of domain architecture, WRC spans 227-271 (DPEPGRCRRTDGKKWRCSRDAVPDQKYCERHINRGRHRSRKPVEV). 2 short sequence motifs (bipartite nuclear localization signal) span residues 232–242 (RCRRTDGKKWR) and 260–267 (RGRHRSRK). Disordered regions lie at residues 260 to 308 (RGRH…ASSN), 417 to 437 (PIAS…EKTT), and 514 to 535 (SSVS…HYTT). The segment covering 272-291 (QSGQNQTAAAASKAVTTPQQ) has biased composition (polar residues). The segment covering 299-308 (NRSNARASSN) has biased composition (low complexity). The span at 426-437 (THNNNNAQEKTT) shows a compositional bias: polar residues.

Belongs to the GRF family. Interacts with GIF1. In terms of tissue distribution, strongly expressed in actively growing and developing tissues, such as roots, upper stems, and shoot tips containing the shoot apical meristem (SAM) and flower buds. Detected in young leaf primordium. Also expressed in mature flowers, but weakly expressed in mature stems and leaves.

Its subcellular location is the nucleus. In terms of biological role, transcription activator that plays a role in the regulation of cell expansion in leaf and cotyledons tissues. Component of a network formed by miR396, the GRFs and their interacting factors (GIFs) acting in the regulation of meristem function, at least partially through the control of cell proliferation. This chain is Growth-regulating factor 2 (GRF2), found in Arabidopsis thaliana (Mouse-ear cress).